A 902-amino-acid polypeptide reads, in one-letter code: Protein translocase subunit SecA (902 aa).

ATP contacts are provided by residues Gln85, 103–107 (GEGKT), and Asp492. Positions 846 to 902 (LSYSGGGEEPNQRPKSPRRRSERKIGPNEPCPCGSGKKFKKCHGRVGAPPLPTSQSQ) are disordered. Zn(2+) is bound by residues Cys876, Cys878, Cys887, and His888.

The protein belongs to the SecA family. In terms of assembly, monomer and homodimer. Part of the essential Sec protein translocation apparatus which comprises SecA, SecYEG and auxiliary proteins SecDF. Other proteins may also be involved. Requires Zn(2+) as cofactor.

It is found in the cell membrane. Its subcellular location is the cytoplasm. It carries out the reaction ATP + H2O + cellular proteinSide 1 = ADP + phosphate + cellular proteinSide 2.. Functionally, part of the Sec protein translocase complex. Interacts with the SecYEG preprotein conducting channel. Has a central role in coupling the hydrolysis of ATP to the transfer of proteins into and across the cell membrane, serving as an ATP-driven molecular motor driving the stepwise translocation of polypeptide chains across the membrane. The protein is Protein translocase subunit SecA of Rubrobacter xylanophilus (strain DSM 9941 / JCM 11954 / NBRC 16129 / PRD-1).